Reading from the N-terminus, the 228-residue chain is A-type ATP synthase subunit D (228 aa).

The segment covering 205 to 214 (KKEEEEKAEA) has biased composition (basic and acidic residues). The interval 205–228 (KKEEEEKAEAAAEAAAVEDPEPAD) is disordered.

Belongs to the V-ATPase D subunit family. In terms of assembly, has multiple subunits with at least A(3), B(3), C, D, E, F, H, I and proteolipid K(x).

It localises to the cell membrane. Component of the A-type ATP synthase that produces ATP from ADP in the presence of a proton gradient across the membrane. In Halorubrum lacusprofundi (strain ATCC 49239 / DSM 5036 / JCM 8891 / ACAM 34), this protein is A-type ATP synthase subunit D.